A 342-amino-acid polypeptide reads, in one-letter code: uncharacterized protein (342 aa).

Helical transmembrane passes span 35 to 55, 134 to 154, and 161 to 180; these read YFRV…WCFS, LLFL…IIYF, and LFIT…YCFS. Disordered regions lie at residues 198–220 and 311–342; these read SSDN…QQYN and IINN…NYTN.

The protein resides in the membrane. This is an uncharacterized protein from Dictyostelium discoideum (Social amoeba).